Consider the following 5206-residue polypeptide: Multifunctional-autoprocessing repeats-in-toxin (5206 aa).

The N-terminal stretch at 1-19 (MGKPFWRSVEYFFTGNYSA) is a signal peptide. RtxA repeat units follow at residues 101 to 118 (GAAGGVSIDHLGNNGDVS), 121 to 138 (GAAAYNGITRKGLSGNVT), 141 to 157 (GAGGYNALWHETNQGNL), 161 to 184 (GAGAGNKLDRTWFNRYQGSRGDVT), 187 to 204 (GAGAANSISSRVETGNIT), 207 to 224 (GAGADNHLVRKGKVGDIT), 255 to 272 (GVGGYNSLYSDVAHGDIH), 275 to 291 (GGGAYNTITRKGSGSSF), 584 to 601 (GAGGGNVIKSNVTRGNVY), 604 to 620 (GGGIANVILHSSQFGNT), 624 to 641 (GGGAANVIVKSGEEGDLT), 644 to 658 (GAGLANVLVHQSKQG), 741 to 753 (AGGANVLTKVGDG), 759 to 771 (MLGGANVITHISG), 782 to 798 (ALGGANILTKKGKGNTL), 801 to 816 (MGGGANVLTHVGDGTT), 820 to 835 (MVGGANILTKVGNGDT), 841 to 855 (GVGNVLTHVGDGQTL), 858 to 875 (MGAAGNIFTKVGDGTSIA), 877 to 891 (MIGAGNIFTHVGEGN), 896 to 910 (MGGLGNVFTKVGNGD), 915 to 932 (MVAEANVFTHIGDGMSVA), 934 to 950 (MLAKGNVATKVGNGTTL), 972 to 984 (MIGQANIMTKVGN), 991 to 1006 (MVGKANIYTHVGDGTS), 1031 to 1043 (GKANIMTHVGDGL), 1067 to 1079 (AAAKANVVTHVGD), 1087 to 1102 (AGKGNILTKVGEGTTV), 1110 to 1122 (GNVMTHVGDGTTI), 1125 to 1142 (AKGKANIITKVGDGLGVN), 1145 to 1159 (WGQANVFTQVGDGDR), 1163 to 1179 (AKGEANIITKVGDGKEV), 1184 to 1199 (GKANIITHVGNGDDYT), 1201 to 1217 (AWGKANVITKVGNGRNV), 1220 to 1236 (AKGEANIVTQVGDGDSF), 1242 to 1256 (KGNIVTKVGDGMQVT), 1258 to 1275 (AKGKANITTTVGDGLSVT), 1296 to 1313 (AWGKYNINTKVGDGLNVA), and 1315 to 1332 (MKGKANANIHVGDGLNIN). The segment covering 1606–1626 (SQQANAVSEHATQNQASQNAL) has biased composition (polar residues). 2 disordered regions span residues 1606 to 1682 (SQQA…ESEA) and 1738 to 1895 (IAAA…EQEA). The span at 1627–1646 (SDKERAEADRQRLEQEKQKQ) shows a compositional bias: basic and acidic residues. A compositionally biased stretch (polar residues) spans 1652-1671 (GSQSQLESTDQQALGNNGQA). The span at 1778–1805 (AEAKADAETRKADAVAKSNDAKQAESDA) shows a compositional bias: basic and acidic residues. Polar residues predominate over residues 1825-1834 (NKANQAQNDA). A compositionally biased stretch (basic and acidic residues) spans 1835 to 1849 (KGTKQNEGDRPDREG). Polar residues predominate over residues 1870–1880 (SHITTDSQTNA). A membrane localization region (MLD) region spans residues 2377-2461 (ELMSVTELLD…SLLNQVNSRL (85 aa)). A rho inactivation domain (RID) region spans residues 2537 to 2901 (EYGQVVADTI…HQVTDVLDAL (365 aa)). Residues 2998 to 3113 (VVLFLHGSGS…MPSMTKAITA (116 aa)) form an ABH effector region region. The 185-residue stretch at 4111–4295 (PTADGGESRF…AENNKVSLSW (185 aa)) folds into the Peptidase C80 domain. Residues 4117-4119 (ESR), 4144-4145 (KH), and R4175 each bind 1D-myo-inositol hexakisphosphate. The active-site For cysteine protease activity is H4181. S4226 is a 1D-myo-inositol hexakisphosphate binding site. Catalysis depends on C4230, which acts as the Nucleophile; for cysteine protease activity. 1D-myo-inositol hexakisphosphate contacts are provided by residues 4259–4261 (SVR), 4272–4273 (RK), K4285, and K4290. Disordered regions lie at residues 4333–4362 (GAIGDNNDVFDAPEKRKAETETSSSSANNK) and 4738–4779 (LKEK…ETPD). Positions 4750 to 4762 (SSVSVNGASVNSA) are enriched in low complexity.

Requires Mg(2+) as cofactor.

The protein resides in the secreted. It is found in the host cytoplasm. It localises to the host cytosol. The protein localises to the host cell membrane. It catalyses the reaction L-lysyl-/S-(2E,6E,10E)-geranylgeranyl-L-cysteinyl-[protein] + hexadecanoyl-CoA = N(6)-hexadecanoyl-L-lysyl-/S-(2E,6E,10E)-geranylgeranyl-L-cysteinyl-[protein] + CoA + H(+). It carries out the reaction L-lysyl-/S-(2E,6E,10E)-geranylgeranyl-L-cysteinyl-[protein] + dodecanoyl-CoA = N(6)-dodecanoyl-L-lysyl-/S-(2E,6E,10E)-geranylgeranyl-L-cysteinyl-[protein] + CoA + H(+). The catalysed reaction is L-lysyl-/S-(2E,6E,10E)-geranylgeranyl-L-cysteinyl-[protein] + decanoyl-CoA = N(6)-decanoyl-L-lysyl-/S-(2E,6E,10E)-geranylgeranyl-L-cysteinyl-[protein] + CoA + H(+). Precursor of a multifunctional toxin that causes destruction of the actin cytoskeleton by covalent cross-linking of actin and inactivation of Rho GTPases when translocated into the host cytoplasm. Upon translocation into the host cell, undergoes autoprocessing in cis mediated by the peptidase C80 domain (also named CPD domain): the protease activity is activated upon binding inositol hexakisphosphate (InsP6) present at the host cell membrane and delivers the Cysteine protease domain-containing toxin F3 chain to the host cytosol. The Cysteine protease domain-containing toxin F3 chain will then further cleave and release effector toxin chains that cause disassembly of the actin cytoskeleton and enhance V.vulnificus colonization of the small intestine, possibly by facilitating evasion of phagocytic cells. Functionally, following autocatalytic cleavage in cis, this chain mediates processing in trans to release other individual toxin chains to the host cytosol. Released effector toxin chains cause disassembly of the actin cytoskeleton and enhance V.vulnificus colonization of the small intestine, possibly by facilitating evasion of phagocytic cells. Its function is as follows. Actin-directed toxin that catalyzes the covalent cross-linking of host cytoplasmic monomeric actin. Mediates the cross-link between 'Lys-50' of one monomer and 'Glu-270' of another actin monomer, resulting in formation of highly toxic actin oligomers that cause cell rounding. The toxin can be highly efficient at very low concentrations by acting on formin homology family proteins: toxic actin oligomers bind with high affinity to formins and adversely affect both nucleation and elongation abilities of formins, causing their potent inhibition in both profilin-dependent and independent manners. Acts as an acid--amino-acid ligase that transfers the gamma-phosphoryl group of ATP to the 'Glu-270' actin residue, resulting in the formation of an activated acyl phosphate intermediate. This intermediate is further hydrolyzed and the energy of hydrolysis is utilized for the formation of the amide bond between actin subunits. In terms of biological role, N-epsilon-fatty acyltransferase that mediates lysine-palmitoylation of host Rho GTPase proteins, with a strong preference for host Rac1. After delivery to the host cytosol, localizes to the host cell membrane where it palmitoylates host Rho GTPase proteins, resulting in loss of all active GTP-bound Rho and subsequent actin depolymerization. Prenylation of host Rac1 at the C-terminus is required for lysine-palmitoylation. Indirectly activates the small GTPase CDC42. The protein is Multifunctional-autoprocessing repeats-in-toxin of Vibrio vulnificus.